The following is an 822-amino-acid chain: BDNF/NT-3 growth factors receptor (822 aa).

Positions 1 to 31 (MSSWIRWHGPAMARLWGFCWLVVGFWRAAFA) are cleaved as a signal peptide. 2 disulfides stabilise this stretch: C32–C38 and C36–C45. The LRRNT domain occupies 32–61 (CPTSCKCSASRIWCSDPSPGIVAFPRLEPN). The Extracellular segment spans residues 32–430 (CPTSCKCSAS…DVTDKTGREH (399 aa)). 3 N-linked (GlcNAc...) asparagine glycosylation sites follow: N67, N95, and N121. LRR repeat units follow at residues 92–113 (GLRN…AFLK) and 116–137 (NLQH…HFRH). Residues 148 to 196 (NPFTCSCDIMWIKTLQEAKSSPDTQDLYCLNESSKNIPLANLQIPNCGL) enclose the LRRCT domain. 2 disulfide bridges follow: C152–C176 and C154–C194. N-linked (GlcNAc...) asparagine glycosylation is found at N178, N205, N241, N254, N280, N325, N338, and N412. Ig-like C2-type domains lie at 197–282 (PSAN…VNLT) and 295–365 (PTSD…IAKN). C218 and C266 are oxidised to a cystine. C302 and C345 form a disulfide bridge. The chain crosses the membrane as a helical span at residues 431–454 (LSVYAVVVIASVVGFCLLVMLFLL). Positions 455–466 (KLARHSKFGMKG) are interaction with MAPK8IP3/JIP3. Topologically, residues 455–822 (KLARHSKFGM…ASPVYLDILG (368 aa)) are cytoplasmic. Positions 475–498 (DDSASPLHHISNGSNTPSSSEGGP) are disordered. Polar residues predominate over residues 485–495 (SNGSNTPSSSE). Y516 bears the Phosphotyrosine; by autocatalysis mark. Positions 538–807 (IVLKRELGEG…KNIKGIHTLL (270 aa)) constitute a Protein kinase domain. ATP contacts are provided by residues 544–552 (LGEGAFGKV) and K572. D676 (proton acceptor) is an active-site residue. Residues Y702, Y706, Y707, and Y817 each carry the phosphotyrosine; by autocatalysis modification.

This sequence belongs to the protein kinase superfamily. Tyr protein kinase family. Insulin receptor subfamily. As to quaternary structure, exists in a dynamic equilibrium between monomeric (low affinity) and dimeric (high affinity) structures. Interacts (phosphorylated upon activation by BDNF) with SHC1; mediates SHC1 phosphorylation and activation. Interacts (phosphorylated upon activation by BDNF) with PLCG1 and/or PLCG2; mediates PLCG1 phosphorylation and activation. Interacts with SH2B1 and SH2B2. Interacts with NGFR; may regulate the ligand specificity of the receptor. Interacts with SORCS2; this interaction is important for normal targeting to post-synaptic densities in response to high-frequency stimulation. Interacts (phosphorylated upon ligand-binding) with SH2D1A; regulates NTRK2. Interacts with SQSTM1 and KIDINS220. Interacts (phosphorylated upon ligand-binding) with FRS2; activates the MAPK signaling pathway. Interacts with APPL1. Interacts with MAPK8IP3/JIP3 and KLC1; interaction with KLC1 is mediated by MAPK8IP3/JIP3. Interacts with SORL1; this interaction facilitates NTRK2 trafficking between synaptic plasma membranes, postsynaptic densities and cell soma, hence positively regulates BDNF signaling. Interacts with SLITRK2. Post-translationally, phosphorylated. Undergoes ligand-mediated autophosphorylation that is required for interaction with SHC1 and PLCG1 and other downstream effectors. Isoform TrkB-T-Shc is not phosphorylated. Ubiquitinated. Undergoes polyubiquitination upon activation; regulated by NGFR. Ubiquitination regulates the internalization of the receptor. In terms of tissue distribution, isoform TrkB is expressed in the central and peripheral nervous system. In the central nervous system (CNS), expression is observed in the cerebral cortex, hippocampus, thalamus, choroid plexus, granular layer of the cerebellum, brain stem, and spinal cord. In the peripheral nervous system, it is expressed in many cranial ganglia, the ophthalmic nerve, the vestibular system, multiple facial structures, the submaxillary glands, and dorsal root ganglia. Isoform TrkB-T1 is mainly expressed in the brain but also detected in other tissues including pancreas, kidney and heart. Isoform TrkB-T-Shc is predominantly expressed in the brain.

It localises to the cell membrane. It is found in the endosome membrane. The protein localises to the early endosome membrane. The protein resides in the cell projection. Its subcellular location is the axon. It localises to the dendrite. It is found in the cytoplasm. The protein localises to the perinuclear region. The protein resides in the postsynaptic density. It carries out the reaction L-tyrosyl-[protein] + ATP = O-phospho-L-tyrosyl-[protein] + ADP + H(+). With respect to regulation, the neuronal activity and the influx of calcium positively regulate the kinase activity and the internalization of the receptor which are both important for active signaling. Regulated by NGFR that may control the internalization of the receptor. NGFR may also stimulate the activation by BDNF compared to NTF3 and NTF4. SH2D1A inhibits the autophosphorylation of the receptor, and alters the recruitment and activation of downstream effectors and signaling cascades. The formation of active receptors dimers able to fully transduce the ligand-mediated signal, may be negatively regulated by the formation of inactive heterodimers with the non-catalytic isoforms. Functionally, receptor tyrosine kinase involved in the development and the maturation of the central and the peripheral nervous systems through regulation of neuron survival, proliferation, migration, differentiation, and synapse formation and plasticity. Receptor for BDNF/brain-derived neurotrophic factor and NTF4/neurotrophin-4. Alternatively can also bind NTF3/neurotrophin-3 which is less efficient in activating the receptor but regulates neuron survival through NTRK2. Upon ligand-binding, undergoes homodimerization, autophosphorylation and activation. Recruits, phosphorylates and/or activates several downstream effectors including SHC1, FRS2, SH2B1, SH2B2 and PLCG1 that regulate distinct overlapping signaling cascades. Through SHC1, FRS2, SH2B1, SH2B2 activates the GRB2-Ras-MAPK cascade that regulates for instance neuronal differentiation including neurite outgrowth. Through the same effectors controls the Ras-PI3 kinase-AKT1 signaling cascade that mainly regulates growth and survival. Through PLCG1 and the downstream protein kinase C-regulated pathways controls synaptic plasticity. Thereby, plays a role in learning and memory by regulating both short term synaptic function and long-term potentiation. PLCG1 also leads to NF-Kappa-B activation and the transcription of genes involved in cell survival. Hence, it is able to suppress anoikis, the apoptosis resulting from loss of cell-matrix interactions. May also play a role in neutrophin-dependent calcium signaling in glial cells and mediate communication between neurons and glia. This Homo sapiens (Human) protein is BDNF/NT-3 growth factors receptor (NTRK2).